A 244-amino-acid polypeptide reads, in one-letter code: 1-(5-phosphoribosyl)-5-[(5-phosphoribosylamino)methylideneamino] imidazole-4-carboxamide isomerase (244 aa).

The active-site Proton acceptor is the Asp-10. Asp-132 functions as the Proton donor in the catalytic mechanism.

This sequence belongs to the HisA/HisF family.

The protein localises to the cytoplasm. It catalyses the reaction 1-(5-phospho-beta-D-ribosyl)-5-[(5-phospho-beta-D-ribosylamino)methylideneamino]imidazole-4-carboxamide = 5-[(5-phospho-1-deoxy-D-ribulos-1-ylimino)methylamino]-1-(5-phospho-beta-D-ribosyl)imidazole-4-carboxamide. It functions in the pathway amino-acid biosynthesis; L-histidine biosynthesis; L-histidine from 5-phospho-alpha-D-ribose 1-diphosphate: step 4/9. This is 1-(5-phosphoribosyl)-5-[(5-phosphoribosylamino)methylideneamino] imidazole-4-carboxamide isomerase from Xanthomonas euvesicatoria pv. vesicatoria (strain 85-10) (Xanthomonas campestris pv. vesicatoria).